Consider the following 320-residue polypeptide: Malate dehydrogenase (320 aa).

NAD(+) contacts are provided by residues 10 to 15 (GAGMIG) and aspartate 34. 2 residues coordinate substrate: arginine 83 and arginine 89. NAD(+)-binding positions include asparagine 96 and 119 to 121 (ITN). Positions 121 and 152 each coordinate substrate. Residue histidine 176 is the Proton acceptor of the active site.

It belongs to the LDH/MDH superfamily. MDH type 3 family.

It catalyses the reaction (S)-malate + NAD(+) = oxaloacetate + NADH + H(+). In terms of biological role, catalyzes the reversible oxidation of malate to oxaloacetate. The sequence is that of Malate dehydrogenase from Caulobacter vibrioides (strain NA1000 / CB15N) (Caulobacter crescentus).